A 356-amino-acid polypeptide reads, in one-letter code: Uroporphyrinogen decarboxylase (356 aa).

Substrate-binding positions include 27 to 31 (RQAGR), D77, Y154, T209, and H327.

Belongs to the uroporphyrinogen decarboxylase family. In terms of assembly, homodimer.

The protein localises to the cytoplasm. It catalyses the reaction uroporphyrinogen III + 4 H(+) = coproporphyrinogen III + 4 CO2. It participates in porphyrin-containing compound metabolism; protoporphyrin-IX biosynthesis; coproporphyrinogen-III from 5-aminolevulinate: step 4/4. Functionally, catalyzes the decarboxylation of four acetate groups of uroporphyrinogen-III to yield coproporphyrinogen-III. The protein is Uroporphyrinogen decarboxylase of Cellvibrio japonicus (strain Ueda107) (Pseudomonas fluorescens subsp. cellulosa).